A 642-amino-acid chain; its full sequence is Threonine--tRNA ligase (642 aa).

One can recognise a TGS domain in the interval Met1–Thr61. Positions Asp243–Pro534 are catalytic. Cys334, His385, and His511 together coordinate Zn(2+).

It belongs to the class-II aminoacyl-tRNA synthetase family. In terms of assembly, homodimer. It depends on Zn(2+) as a cofactor.

The protein localises to the cytoplasm. The catalysed reaction is tRNA(Thr) + L-threonine + ATP = L-threonyl-tRNA(Thr) + AMP + diphosphate + H(+). Functionally, catalyzes the attachment of threonine to tRNA(Thr) in a two-step reaction: L-threonine is first activated by ATP to form Thr-AMP and then transferred to the acceptor end of tRNA(Thr). Also edits incorrectly charged L-seryl-tRNA(Thr). This is Threonine--tRNA ligase from Shewanella sp. (strain W3-18-1).